The chain runs to 402 residues: Centromere protein C (402 aa).

Lysine 1 participates in a covalent cross-link: Glycyl lysine isopeptide (Lys-Gly) (interchain with G-Cter in SUMO2). The span at 1–12 shows a compositional bias: low complexity; sequence KSEQSSFSSSSS. Positions 1–118 are disordered; sequence KSEQSSFSSS…HQKSQMSVET (118 aa). Serine 5 is modified (phosphoserine). The short motif at 25 to 42 is the Nuclear localization signal element; the sequence is QKPPAEKTNQSSKNIGKK. Residues 44 to 53 are compositionally biased toward basic residues; the sequence is APFKKQKRAN. The span at 88-118 shows a compositional bias: polar residues; it reads PNPSGDTGSSKNQDSMAAQNVHQKSQMSVET. Residue lysine 186 forms a Glycyl lysine isopeptide (Lys-Gly) (interchain with G-Cter in SUMO2) linkage. At threonine 193 the chain carries Phosphothreonine. Positions 196-218 are MIF2 homology domain II; it reads VRRTMRTRSKPLEYWRGERIDYQ. Phosphoserine is present on residues serine 222 and serine 232. Residues 239–257 carry the Nuclear localization signal motif; sequence KRKAKGNLGRIITTANRKR. Lysine 266 is covalently cross-linked (Glycyl lysine isopeptide (Lys-Gly) (interchain with G-Cter in SUMO2)). The MIF2 homology domain III stretch occupies residues 349–402; sequence LVFYVNLGYLLCTLHETPYIVTTGDSFYVPSGNYYNIKNLLNEERVLLFTQIKS.

The protein belongs to the CENP-C/MIF2 family. As to quaternary structure, oligomer. Component of the CENPA-NAC complex, at least composed of CENPA, CENPC, CENPH, CENPM, CENPN, CENPT and CENPU. The CENPA-NAC complex interacts with the CENPA-CAD complex, composed of CENPI, CENPK, CENPL, CENPO, CENPP, CENPQ, CENPR and CENPS. Binds to DAXX. Interacts with DNMT3B. Interacts directly with CENPA. Identified in a centromere complex containing histones H2A, H2B and H4, and at least CENPA, CENPB, CENPC, CENPT, CENPN, HJURP, SUPT16H, SSRP1 and RSF1. Interacts with MEIKIN.

The protein resides in the nucleus. Its subcellular location is the chromosome. It localises to the centromere. It is found in the kinetochore. Component of the CENPA-NAC (nucleosome-associated) complex, a complex that plays a central role in assembly of kinetochore proteins, mitotic progression and chromosome segregation. The CENPA-NAC complex recruits the CENPA-CAD (nucleosome distal) complex and may be involved in incorporation of newly synthesized CENPA into centromeres. CENPC recruits DNA methylation and DNMT3B to both centromeric and pericentromeric satellite repeats and regulates the histone code in these regions. In Ovis aries (Sheep), this protein is Centromere protein C (CENPC).